A 679-amino-acid polypeptide reads, in one-letter code: ATP-dependent zinc metalloprotease FtsH (679 aa).

The Cytoplasmic portion of the chain corresponds to 1 to 6 (MNRIFR). Residues 7 to 27 (NTIFYLLIFLVIVGIVSVFNS) form a helical membrane-spanning segment. Topologically, residues 28–114 (DQTETENVSF…IEPADETSGW (87 aa)) are extracellular. A helical transmembrane segment spans residues 115 to 135 (VQFFTGIIPFIIIFILFFFLL). At 136-679 (SQAQGGGSRV…SFEDDTNKKE (544 aa)) the chain is on the cytoplasmic side. 206 to 213 (GPPGTGKT) is a binding site for ATP. His-428 provides a ligand contact to Zn(2+). Residue Glu-429 is part of the active site. Zn(2+)-binding residues include His-432 and Asp-504. Basic and acidic residues-rich tracts occupy residues 621–642 (LEKE…KEET) and 658–679 (PIEK…NKKE). The interval 621–679 (LEKEKASESDVKVNINSKKEETPQVEAEQPQEPNTDEPIEKDPSVEDNRSFEDDTNKKE) is disordered.

This sequence in the central section; belongs to the AAA ATPase family. The protein in the C-terminal section; belongs to the peptidase M41 family. As to quaternary structure, homohexamer. It depends on Zn(2+) as a cofactor.

The protein localises to the cell membrane. Functionally, acts as a processive, ATP-dependent zinc metallopeptidase for both cytoplasmic and membrane proteins. Plays a role in the quality control of integral membrane proteins. This Alkalihalophilus pseudofirmus (strain ATCC BAA-2126 / JCM 17055 / OF4) (Bacillus pseudofirmus) protein is ATP-dependent zinc metalloprotease FtsH.